Reading from the N-terminus, the 427-residue chain is ATP-sensitive inward rectifier potassium channel 12 (427 aa).

The Cytoplasmic segment spans residues 1-77 (MTAASRANPY…LADMFTTCVD (77 aa)). S-nitrosocysteine is present on Cys75. A helical membrane pass occupies residues 78-104 (IRWRYMLLIFSLAFLASWLLFGIIFWV). A 1,2-diacyl-sn-glycero-3-phospho-(1D-myo-inositol-4,5-bisphosphate)-binding residues include Arg79 and Arg81. Residues 105–129 (IAVAHGDLEPAEGRGRTPCVLQVHG) lie on the Extracellular side of the membrane. Cys123 and Cys155 are joined by a disulfide. Residues 130–146 (FMAAFLFSIETQTTIGY) constitute an intramembrane region (helical; Pore-forming). K(+)-binding residues include Thr143, Ile144, Gly145, and Tyr146. Residues 143-148 (TIGYGL) carry the Selectivity filter motif. Residues 147–155 (GLRCVTEEC) are Extracellular-facing. Residues 156–183 (PVAVFMVVAQSIVGCIIDSFMIGAIMAK) traverse the membrane as a helical segment. 2 residues coordinate a 1,2-diacyl-sn-glycero-3-phospho-(1D-myo-inositol-4,5-bisphosphate): Lys183 and Lys188. Over 184–427 (MARPKKRAQT…ERPYRRESEI (244 aa)) the chain is Cytoplasmic. Residues 387–427 (DEEDEVATDRDGRSPQPEHDFDRLQASSAALERPYRRESEI) form a disordered region. Basic and acidic residues predominate over residues 393–409 (ATDRDGRSPQPEHDFDR). A PDZ-binding motif is present at residues 425-427 (SEI).

It belongs to the inward rectifier-type potassium channel (TC 1.A.2.1) family. KCNJ12 subfamily. As to quaternary structure, homotetramer. Forms heteromer with KCNJ4. Can form heteromeric channels with Kir2.6/KCNJ18. Association, via its PDZ-recognition domain, with LIN7A, LIN7B, LIN7C, DLG1, CASK and APBA1 plays a key role in its localization and trafficking. In terms of tissue distribution, highest level in cerebellum.

It localises to the membrane. The protein resides in the cell membrane. It is found in the sarcolemma. The protein localises to the T-tubule. The catalysed reaction is K(+)(in) = K(+)(out). Activated by phosphatidylinositol 4,5-biphosphate (PtdIns(4,5)P2). PtdIns(4,5)P2 binding to the cytoplasmic side of the channel triggers a conformation change leading to channel opening. Inhibited by Ba(2+). Inward rectifying potassium channel that probably participates in controlling the resting membrane potential in electrically excitable cells. It probably participates in establishing action potential waveform and excitability of neuronal and muscle tissues. Inward rectifier potassium channels are characterized by a greater tendency to allow potassium to flow into the cell rather than out of it. Their voltage dependence is regulated by the concentration of extracellular potassium; as external potassium is raised, the voltage range of the channel opening shifts to more positive voltages. The inward rectification is mainly due to the blockage of outward current by internal magnesium. The sequence is that of ATP-sensitive inward rectifier potassium channel 12 (Kcnj12) from Mus musculus (Mouse).